Reading from the N-terminus, the 436-residue chain is tRNA-2-methylthio-N(6)-dimethylallyladenosine synthase (436 aa).

In terms of domain architecture, MTTase N-terminal spans 5-121 (RKLFIKTYGC…LPDMLERTEG (117 aa)). [4Fe-4S] cluster is bound by residues cysteine 14, cysteine 50, cysteine 84, cysteine 158, cysteine 162, and cysteine 165. A Radical SAM core domain is found at 144–373 (ALRGPTAFLT…LGEQQRAAQA (230 aa)). Residues 373–435 (AAMVGRELGV…PNSLAGERIG (63 aa)) form the TRAM domain.

It belongs to the methylthiotransferase family. MiaB subfamily. As to quaternary structure, monomer. [4Fe-4S] cluster is required as a cofactor.

It is found in the cytoplasm. The catalysed reaction is N(6)-dimethylallyladenosine(37) in tRNA + (sulfur carrier)-SH + AH2 + 2 S-adenosyl-L-methionine = 2-methylsulfanyl-N(6)-dimethylallyladenosine(37) in tRNA + (sulfur carrier)-H + 5'-deoxyadenosine + L-methionine + A + S-adenosyl-L-homocysteine + 2 H(+). Functionally, catalyzes the methylthiolation of N6-(dimethylallyl)adenosine (i(6)A), leading to the formation of 2-methylthio-N6-(dimethylallyl)adenosine (ms(2)i(6)A) at position 37 in tRNAs that read codons beginning with uridine. The sequence is that of tRNA-2-methylthio-N(6)-dimethylallyladenosine synthase from Cereibacter sphaeroides (strain ATCC 17025 / ATH 2.4.3) (Rhodobacter sphaeroides).